A 616-amino-acid chain; its full sequence is Telomeric repeat-binding factor 2-interacting protein 1 (616 aa).

The 84-residue stretch at 15–98 folds into the BRCT domain; it reads FLDPGGQSMR…QQLDPNDYAI (84 aa). The Myb-like domain maps to 112 to 169; sequence NQGSGRLGYSSEEDAAILKFIEKRQQDAKGNLVWKEMEKRHVTEHSWQSMKDRFLKHL. The tract at residues 174-518 is disordered; sequence ADKPTKKSPI…CSHIRETPEE (345 aa). Positions 232–245 are enriched in low complexity; the sequence is PERASSPPEEPQAA. Positions 246 to 255 are enriched in polar residues; that stretch reads GQPSQASSND. Composition is skewed to basic and acidic residues over residues 271–288 and 344–358; these read ENPR…EHSS and RSSR…RDIP. 2 stretches are compositionally biased toward polar residues: residues 363-382 and 397-415; these read EQSS…SDSG and NANS…ASTP. Positions 431 to 444 are enriched in acidic residues; the sequence is EDSDVMDDSEECEN. Residues 468–480 are compositionally biased toward basic and acidic residues; it reads REPESQAEHHEET. A Nuclear localization signal motif is present at residues 597–613; it reads SKFGEEEVTRRKSFLAT.

The protein belongs to the RAP1 family. Homodimer. Component of the shelterin complex (telosome). Interacts with terf2; the interaction is direct.

The protein resides in the nucleus. It localises to the chromosome. It is found in the telomere. Acts both as a regulator of telomere function and as a transcription regulator. Involved in the regulation of telomere length and protection as a component of the shelterin complex (telosome). Does not bind DNA directly: recruited to telomeric double-stranded 5'-TTAGGG-3' repeats via its interaction with terf2. Independently of its function in telomeres, also acts as a transcription regulator: recruited to extratelomeric 5'-TTAGGG-3' sites via its association with terf2 or other factors, and regulates gene expression. This Danio rerio (Zebrafish) protein is Telomeric repeat-binding factor 2-interacting protein 1 (terf2ip).